Here is a 675-residue protein sequence, read N- to C-terminus: Cytoplasmic tyrosine-protein kinase BMX (675 aa).

A PH domain is found at 4-111 (KSILEELLLK…WLKALQKEIR (108 aa)). The segment at 113–149 (NPHLLVKYHSGFFVDGKFLCCQQSCKAAPGCTLWEAY) adopts a Btk-type zinc-finger fold. Residues histidine 121, cysteine 132, cysteine 133, and cysteine 143 each contribute to the Zn(2+) site. Tyrosine 216 and tyrosine 224 each carry phosphotyrosine; by autocatalysis. The SH2 domain maps to 296–392 (WFAGNISRSQ…GMITRLRHPV (97 aa)). The region spanning 417-675 (ITLLKELGSG…IEPLREKDKH (259 aa)) is the Protein kinase domain. ATP-binding positions include 423-431 (LGSGQFGVV) and lysine 445. The Proton acceptor role is filled by aspartate 536. A Phosphotyrosine; by SRC and autocatalysis modification is found at tyrosine 566. The short motif at 596 to 603 (WAFGILMW) is the CAV1-binding element.

Belongs to the protein kinase superfamily. Tyr protein kinase family. TEC subfamily. As to quaternary structure, interacts with BCAR1, CAV1, MYD88, PTK2/FAK1, RUFY1, RUFY2, STAT3, TIRAP and TNFRSF1B. Requires Zn(2+) as cofactor. In terms of processing, phosphorylated in response to protein I/II and to LPS. Phosphorylation at Tyr-566 by SRC and by autocatalysis leads to activation and is required for STAT3 phosphorylation by BMX. As to expression, highly expressed in cells with great migratory potential, including endothelial cells and metastatic carcinoma cell lines.

It localises to the cytoplasm. It carries out the reaction L-tyrosyl-[protein] + ATP = O-phospho-L-tyrosyl-[protein] + ADP + H(+). TEK and vascular endothelial growth factor receptor 1 (FLT1) stimulate BMX tyrosine kinase activity. Activated by integrins through the mediation of PTK2/FAK1. Activated by TNF through the mediation of TNFRSF1B. In terms of biological role, non-receptor tyrosine kinase that plays central but diverse modulatory roles in various signaling processes involved in the regulation of actin reorganization, cell migration, cell proliferation and survival, cell adhesion, and apoptosis. Participates in signal transduction stimulated by growth factor receptors, cytokine receptors, G-protein coupled receptors, antigen receptors and integrins. Induces tyrosine phosphorylation of BCAR1 in response to integrin regulation. Activation of BMX by integrins is mediated by PTK2/FAK1, a key mediator of integrin signaling events leading to the regulation of actin cytoskeleton and cell motility. Plays a critical role in TNF-induced angiogenesis, and implicated in the signaling of TEK and FLT1 receptors, 2 important receptor families essential for angiogenesis. Required for the phosphorylation and activation of STAT3, a transcription factor involved in cell differentiation. Also involved in interleukin-6 (IL6) induced differentiation. Also plays a role in programming adaptive cytoprotection against extracellular stress in different cell systems, salivary epithelial cells, brain endothelial cells, and dermal fibroblasts. May be involved in regulation of endocytosis through its interaction with an endosomal protein RUFY1. May also play a role in the growth and differentiation of hematopoietic cells; as well as in signal transduction in endocardial and arterial endothelial cells. In Homo sapiens (Human), this protein is Cytoplasmic tyrosine-protein kinase BMX (BMX).